Here is a 623-residue protein sequence, read N- to C-terminus: Chaperone protein DnaK (623 aa).

Thr-197 bears the Phosphothreonine; by autocatalysis mark. The span at 595-615 (AENMYKKDEPNTANDKKKKDD) shows a compositional bias: basic and acidic residues. The interval 595–623 (AENMYKKDEPNTANDKKKKDDDVIDAEVE) is disordered.

It belongs to the heat shock protein 70 family.

Its function is as follows. Acts as a chaperone. The polypeptide is Chaperone protein DnaK (Campylobacter jejuni subsp. jejuni serotype O:6 (strain 81116 / NCTC 11828)).